The primary structure comprises 321 residues: Coproporphyrin III ferrochelatase (321 aa).

Fe(2+) contacts are provided by His-185 and Glu-267.

It belongs to the ferrochelatase family.

It localises to the cytoplasm. The enzyme catalyses Fe-coproporphyrin III + 2 H(+) = coproporphyrin III + Fe(2+). The protein operates within porphyrin-containing compound metabolism; protoheme biosynthesis. Involved in coproporphyrin-dependent heme b biosynthesis. Catalyzes the insertion of ferrous iron into coproporphyrin III to form Fe-coproporphyrin III. In Lacticaseibacillus paracasei (strain ATCC 334 / BCRC 17002 / CCUG 31169 / CIP 107868 / KCTC 3260 / NRRL B-441) (Lactobacillus paracasei), this protein is Coproporphyrin III ferrochelatase.